A 166-amino-acid polypeptide reads, in one-letter code: Small ribosomal subunit protein uS5 (166 aa).

The 64-residue stretch at 11 to 74 folds into the S5 DRBM domain; the sequence is LIEKLVSVKR…ENAKKNMVSV (64 aa).

It belongs to the universal ribosomal protein uS5 family. Part of the 30S ribosomal subunit. Contacts proteins S4 and S8.

Its function is as follows. With S4 and S12 plays an important role in translational accuracy. Functionally, located at the back of the 30S subunit body where it stabilizes the conformation of the head with respect to the body. The polypeptide is Small ribosomal subunit protein uS5 (Francisella tularensis subsp. tularensis (strain FSC 198)).